A 264-amino-acid chain; its full sequence is Thymidylate synthase 2 (264 aa).

Arg-21 is a binding site for dUMP. Residue His-51 coordinates (6R)-5,10-methylene-5,6,7,8-tetrahydrofolate. 126–127 is a dUMP binding site; that stretch reads RR. Cys-146 acts as the Nucleophile in catalysis. DUMP contacts are provided by residues 166 to 169, Asn-177, and 207 to 209; these read RSAD and HIY. Asp-169 lines the (6R)-5,10-methylene-5,6,7,8-tetrahydrofolate pocket. Position 263 (Ser-263) interacts with (6R)-5,10-methylene-5,6,7,8-tetrahydrofolate.

It belongs to the thymidylate synthase family. Bacterial-type ThyA subfamily. As to quaternary structure, homodimer.

It localises to the cytoplasm. The enzyme catalyses dUMP + (6R)-5,10-methylene-5,6,7,8-tetrahydrofolate = 7,8-dihydrofolate + dTMP. It participates in pyrimidine metabolism; dTTP biosynthesis. In terms of biological role, catalyzes the reductive methylation of 2'-deoxyuridine-5'-monophosphate (dUMP) to 2'-deoxythymidine-5'-monophosphate (dTMP) while utilizing 5,10-methylenetetrahydrofolate (mTHF) as the methyl donor and reductant in the reaction, yielding dihydrofolate (DHF) as a by-product. This enzymatic reaction provides an intracellular de novo source of dTMP, an essential precursor for DNA biosynthesis. The protein is Thymidylate synthase 2 of Bacillus spizizenii (strain ATCC 23059 / NRRL B-14472 / W23) (Bacillus subtilis subsp. spizizenii).